We begin with the raw amino-acid sequence, 442 residues long: Adenylosuccinate synthetase (442 aa).

Residues 16–22 and 44–46 each bind GTP; these read GDEGKGK and GHT. Asp17 acts as the Proton acceptor in catalysis. Asp17 and Gly44 together coordinate Mg(2+). Residues 17–20, 42–45, Thr133, Arg147, Gln228, Thr243, and Arg307 each bind IMP; these read DEGK and NAGH. The active-site Proton donor is the His45. Substrate is bound at residue 303-309; it reads AVTGRPR. GTP is bound by residues Arg309, 335-337, and 417-419; these read KLD and STG.

Belongs to the adenylosuccinate synthetase family. As to quaternary structure, homodimer. Requires Mg(2+) as cofactor.

It localises to the cytoplasm. It carries out the reaction IMP + L-aspartate + GTP = N(6)-(1,2-dicarboxyethyl)-AMP + GDP + phosphate + 2 H(+). Its pathway is purine metabolism; AMP biosynthesis via de novo pathway; AMP from IMP: step 1/2. Plays an important role in the de novo pathway of purine nucleotide biosynthesis. Catalyzes the first committed step in the biosynthesis of AMP from IMP. In Koribacter versatilis (strain Ellin345), this protein is Adenylosuccinate synthetase.